The chain runs to 153 residues: ATSNVFSMFDQSQIQEFKEAFTMIDANRDGFIDQEDLKDTYASLGRGIKDERIRDMLAESSGPVNFQIFLGLFGDKLSGTDPEETILEAFKILDADNKGVINKNYLAEIMMTQADRFSQSEVNQMFDISPIDVAGNLDYKSLCYIITHGQEEE.

EF-hand domains follow at residues 12 to 47, 81 to 116, and 117 to 152; these read SQIQEFKEAFTMIDANRDGFIDQEDLKDTYASLGRG, DPEETILEAFKILDADNKGVINKNYLAEIMMTQADR, and FSQSEVNQMFDISPIDVAGNLDYKSLCYIITHGQEE. Positions 25, 27, 29, and 36 each coordinate Ca(2+).

In molluscan muscle, calcium regulation is associated with myosin rather than with actin. Muscle myosin contains two types of light chains: the catalytic light chain, essential for ATPase activity, and the regulatory light chain, a calcium-binding protein responsible for Ca(2+) dependent binding and Ca(2+) dependent Mg-ATPase activity. The polypeptide is Myosin regulatory light chain, smooth muscle (Halocynthia roretzi (Sea squirt)).